The sequence spans 226 residues: Probable C4-dicarboxylate response regulator DctR (226 aa).

In terms of domain architecture, Response regulatory spans 7–123 (KVLLIEDDPM…RMRQALEKYK (117 aa)). The residue at position 58 (Asp58) is a 4-aspartylphosphate. Positions 179-198 (AEEVAKALGIARVTARRYLD) form a DNA-binding region, H-T-H motif.

Phosphorylated by DctS.

The protein resides in the cytoplasm. Functionally, member of the two-component regulatory system DctS/DctR. Essential for expression of dctP. In Bacillus subtilis (strain 168), this protein is Probable C4-dicarboxylate response regulator DctR (dctR).